Consider the following 130-residue polypeptide: Small ribosomal subunit protein uS9 (130 aa).

Belongs to the universal ribosomal protein uS9 family.

This is Small ribosomal subunit protein uS9 from Polaromonas sp. (strain JS666 / ATCC BAA-500).